Consider the following 517-residue polypeptide: Variant surface glycoprotein MVAT5 (517 aa).

Positions 1–21 (MIGKAFIILSLLNELPTPTAA) are cleaved as a signal peptide. 2 disulfide bridges follow: Cys-417–Cys-430 and Cys-426–Cys-443. N-linked (GlcNAc...) asparagine glycosylation is present at Asn-435. Residues 454–470 (QAAQTAGAGEGAAGTTT) are compositionally biased toward low complexity. Residues 454–487 (QAAQTAGAGEGAAGTTTDKCKDKKKDDCKSPDCK) form a disordered region. Residues 471-487 (DKCKDKKKDDCKSPDCK) are compositionally biased toward basic and acidic residues. Asp-495 carries GPI-anchor amidated aspartate lipidation. The propeptide at 496–517 (SSILLNKQFALMVSAAFVALLF) is removed in mature form.

The protein resides in the cell membrane. Its function is as follows. VSG forms a coat on the surface of the parasite. The trypanosome evades the immune response of the host by expressing a series of antigenically distinct VSGs from an estimated 1000 VSG genes. The sequence is that of Variant surface glycoprotein MVAT5 from Trypanosoma brucei rhodesiense.